A 438-amino-acid chain; its full sequence is Malic acid transport protein (438 aa).

The next 10 helical transmembrane spans lie at 37–57 (SWFA…SFPF), 65–85 (IGKI…SCML), 106–126 (LFIA…AIYA), 140–160 (ILYY…FFTI), 172–192 (SPAW…AGAV), 205–225 (VIFG…LFAV), 242–262 (PGMF…INIA), 288–308 (FMAI…MVSF), 321–341 (ACGW…TIEI), and 353–373 (FGHI…YLMV). The tract at residues 390–438 (AHPPPKPNTGVLNPTFPPEKAPASLEKVDTHVTSTGGESDPPSSEHESV) is disordered. Phosphoserine is present on residues Ser413, Ser423, Ser428, Ser432, Ser433, and Ser437.

It belongs to the tellurite-resistance/dicarboxylate transporter (TDT) family.

Its subcellular location is the membrane. In terms of biological role, permease for malate and other C4 dicarboxylic acids. The chain is Malic acid transport protein (mae1) from Schizosaccharomyces pombe (strain 972 / ATCC 24843) (Fission yeast).